A 204-amino-acid polypeptide reads, in one-letter code: Shikimate kinase (204 aa).

ATP is bound at residue Ala-35 to Thr-40. Position 39 (Ser-39) interacts with Mg(2+). The substrate site is built by Asp-57, Arg-81, and Gly-103. Residue Arg-142 coordinates ATP. Arg-169 serves as a coordination point for substrate.

The protein belongs to the shikimate kinase family. As to quaternary structure, monomer. Requires Mg(2+) as cofactor.

Its subcellular location is the cytoplasm. The enzyme catalyses shikimate + ATP = 3-phosphoshikimate + ADP + H(+). It functions in the pathway metabolic intermediate biosynthesis; chorismate biosynthesis; chorismate from D-erythrose 4-phosphate and phosphoenolpyruvate: step 5/7. Functionally, catalyzes the specific phosphorylation of the 3-hydroxyl group of shikimic acid using ATP as a cosubstrate. In Salinibacter ruber (strain DSM 13855 / M31), this protein is Shikimate kinase.